The following is a 549-amino-acid chain: Teichoic acids export ATP-binding protein TagH (549 aa).

The ABC transporter domain maps to 22–243 (DKLKDLFRKQ…YRAFLKEYNQ (222 aa)). Residue 57–64 (GLNGSGKS) coordinates ATP. Residues 244-549 (MSMEDRKKFQ…EIQSISIVKK (306 aa)) are unknown. An SH3b domain is found at 346–415 (ENMYMVKSNG…VSTKFIEPFK (70 aa)).

This sequence belongs to the ABC transporter superfamily. Teichoic acids exporter (TC 3.A.1.104.1) family. As to quaternary structure, the complex is composed of two ATP-binding proteins (TagH) and two transmembrane proteins (TagG).

It is found in the cell membrane. The enzyme catalyses ATP + H2O + teichoic acidSide 1 = ADP + phosphate + teichoic acidSide 2.. Part of the ABC transporter complex TagGH involved in teichoic acids export. Responsible for energy coupling to the transport system. The protein is Teichoic acids export ATP-binding protein TagH of Bacillus cereus (strain ZK / E33L).